Here is a 545-residue protein sequence, read N- to C-terminus: Ribulokinase (545 aa).

The protein belongs to the ribulokinase family.

It carries out the reaction D-ribulose + ATP = D-ribulose 5-phosphate + ADP + H(+). The enzyme catalyses L-ribulose + ATP = L-ribulose 5-phosphate + ADP + H(+). It functions in the pathway carbohydrate degradation; L-arabinose degradation via L-ribulose; D-xylulose 5-phosphate from L-arabinose (bacterial route): step 2/3. The protein is Ribulokinase of Staphylococcus aureus (strain bovine RF122 / ET3-1).